The following is a 245-amino-acid chain: 1-(5-phosphoribosyl)-5-[(5-phosphoribosylamino)methylideneamino] imidazole-4-carboxamide isomerase (245 aa).

Residue Asp7 is the Proton acceptor of the active site. The Proton donor role is filled by Asp129.

The protein belongs to the HisA/HisF family.

It is found in the cytoplasm. The catalysed reaction is 1-(5-phospho-beta-D-ribosyl)-5-[(5-phospho-beta-D-ribosylamino)methylideneamino]imidazole-4-carboxamide = 5-[(5-phospho-1-deoxy-D-ribulos-1-ylimino)methylamino]-1-(5-phospho-beta-D-ribosyl)imidazole-4-carboxamide. Its pathway is amino-acid biosynthesis; L-histidine biosynthesis; L-histidine from 5-phospho-alpha-D-ribose 1-diphosphate: step 4/9. The polypeptide is 1-(5-phosphoribosyl)-5-[(5-phosphoribosylamino)methylideneamino] imidazole-4-carboxamide isomerase (Pectobacterium carotovorum subsp. carotovorum (strain PC1)).